We begin with the raw amino-acid sequence, 662 residues long: Pollen receptor-like kinase 1 (662 aa).

An N-terminal signal peptide occupies residues 1–31 (MPPMQARTLSVYNVMVPLVCLLLFFSTPTHG). The Extracellular segment spans residues 32–256 (LSDSEAILKF…ARPKSSSRGP (225 aa)). LRR repeat units follow at residues 79–98 (QMENLELSGSIDIEALSGLT), 99–121 (SLRTLSFMNNKFEGPFPDFKKLA), 122–144 (ALKSLYLSNNQFGGDIPGDAFEG), 147–169 (WLKKVHLAQNKFTGQIPSSVAKL), 171–191 (KLLELRLDGNQFTGEIPEFEH), and 192–214 (QLHLLNLSNNALTGPIPESLSMT). N197 carries N-linked (GlcNAc...) asparagine glycosylation. The tract at residues 233–253 (ECDSPYIEHPPQSEARPKSSS) is disordered. A helical membrane pass occupies residues 257–277 (LVITAIVAALTILIILGVIFL). The Cytoplasmic segment spans residues 278 to 662 (LNRSYKNKKP…GESCESISFA (385 aa)). Residues 288 to 330 (RLAVETGPSSLQKKTGIREADQSRRDRKKADHRKGSGTTKRMG) are disordered. Residues 357-639 (KASAEILGSG…EREGDDDDFY (283 aa)) enclose the Protein kinase domain. The residue at position 359 (S359) is a Phosphoserine. ATP is bound by residues 363–371 (LGSGCFGAS) and K385. S437 is modified (phosphoserine). T457 carries the phosphothreonine modification. Residue Y527 is modified to Phosphotyrosine. Positions 636–662 (DDFYSTYVSETDGRSSKGESCESISFA) are disordered. Positions 646–655 (TDGRSSKGES) are enriched in basic and acidic residues.

Belongs to the protein kinase superfamily. Ser/Thr protein kinase family. In terms of assembly, interacts in vitro with ROPGEF1 (via PRONE domain). Expressed in pollen and/or in flowers, but not in leaves.

Its subcellular location is the cell membrane. The catalysed reaction is L-seryl-[protein] + ATP = O-phospho-L-seryl-[protein] + ADP + H(+). It catalyses the reaction L-threonyl-[protein] + ATP = O-phospho-L-threonyl-[protein] + ADP + H(+). Functionally, receptor-like kinase involved in the control of pollen germination and pollen tube polar growth. The chain is Pollen receptor-like kinase 1 from Arabidopsis thaliana (Mouse-ear cress).